The following is a 198-amino-acid chain: Large ribosomal subunit protein bL25 (198 aa).

Belongs to the bacterial ribosomal protein bL25 family. CTC subfamily. As to quaternary structure, part of the 50S ribosomal subunit; part of the 5S rRNA/L5/L18/L25 subcomplex. Contacts the 5S rRNA. Binds to the 5S rRNA independently of L5 and L18.

This is one of the proteins that binds to the 5S RNA in the ribosome where it forms part of the central protuberance. In Phocaeicola vulgatus (strain ATCC 8482 / DSM 1447 / JCM 5826 / CCUG 4940 / NBRC 14291 / NCTC 11154) (Bacteroides vulgatus), this protein is Large ribosomal subunit protein bL25.